Consider the following 307-residue polypeptide: Acetaldehyde dehydrogenase (307 aa).

12–15 serves as a coordination point for NAD(+); the sequence is SGNI. Cys130 (acyl-thioester intermediate) is an active-site residue. NAD(+) contacts are provided by residues 161–169 and Asn272; that span reads SVGPGTRQN.

Belongs to the acetaldehyde dehydrogenase family.

It catalyses the reaction acetaldehyde + NAD(+) + CoA = acetyl-CoA + NADH + H(+). The sequence is that of Acetaldehyde dehydrogenase from Shewanella halifaxensis (strain HAW-EB4).